The primary structure comprises 366 residues: Polyamine aminopropyltransferase 2 (366 aa).

The segment covering 20-58 (KDKRSELDSDKFELEQQDKHDIQDKQDKQDEQNKQDKQV) has biased composition (basic and acidic residues). The interval 20-61 (KDKRSELDSDKFELEQQDKHDIQDKQDKQDEQNKQDKQVQSE) is disordered. A PABS domain is found at 74–305 (DVWDEISLKE…TDWGFHLATN (232 aa)). Position 100 (glutamine 100) interacts with S-methyl-5'-thioadenosine. 2 residues coordinate spermidine: histidine 129 and aspartate 153. S-methyl-5'-thioadenosine is bound by residues aspartate 173 and 207 to 208 (DA). Aspartate 225 (proton acceptor) is an active-site residue.

It belongs to the spermidine/spermine synthase family. Homodimer or homotetramer.

The protein resides in the cytoplasm. The catalysed reaction is S-adenosyl 3-(methylsulfanyl)propylamine + putrescine = S-methyl-5'-thioadenosine + spermidine + H(+). The protein operates within amine and polyamine biosynthesis; spermidine biosynthesis; spermidine from putrescine: step 1/1. Its function is as follows. Catalyzes the irreversible transfer of a propylamine group from the amino donor S-adenosylmethioninamine (decarboxy-AdoMet) to putrescine (1,4-diaminobutane) to yield spermidine. The polypeptide is Polyamine aminopropyltransferase 2 (Bacillus cereus (strain ATCC 14579 / DSM 31 / CCUG 7414 / JCM 2152 / NBRC 15305 / NCIMB 9373 / NCTC 2599 / NRRL B-3711)).